Consider the following 84-residue polypeptide: Putative defensin-like protein 38 (84 aa).

A signal peptide spans Met1–Ala26. 4 disulfides stabilise this stretch: Cys28–Cys84, Cys41–Cys65, Cys50–Cys76, and Cys54–Cys78.

Belongs to the DEFL family.

The protein localises to the secreted. The protein is Putative defensin-like protein 38 of Arabidopsis thaliana (Mouse-ear cress).